A 396-amino-acid chain; its full sequence is Tryptophan synthase beta chain (396 aa).

Position 86 is an N6-(pyridoxal phosphate)lysine (K86).

The protein belongs to the TrpB family. In terms of assembly, tetramer of two alpha and two beta chains. It depends on pyridoxal 5'-phosphate as a cofactor.

It catalyses the reaction (1S,2R)-1-C-(indol-3-yl)glycerol 3-phosphate + L-serine = D-glyceraldehyde 3-phosphate + L-tryptophan + H2O. The protein operates within amino-acid biosynthesis; L-tryptophan biosynthesis; L-tryptophan from chorismate: step 5/5. Functionally, the beta subunit is responsible for the synthesis of L-tryptophan from indole and L-serine. The protein is Tryptophan synthase beta chain of Pectobacterium carotovorum subsp. carotovorum (strain PC1).